The chain runs to 264 residues: COP9 signalosome complex subunit 7b (264 aa).

Alanine 2 carries the N-acetylalanine modification. The PCI domain maps to 2 to 159 (AGEQKPSSNL…QLLEVDFCIG (158 aa)). The stretch at 194–237 (RANQYKENHSRTQQQVEAEVTNIKKTLKATASSSAQEMEQQLAE) forms a coiled coil. A compositionally biased stretch (polar residues) spans 223–232 (TASSSAQEME). Positions 223-264 (TASSSAQEMEQQLAERECPPHAEQRQPTKKMSKVKGLVSSRH) are disordered. Positions 235–248 (LAERECPPHAEQRQ) are enriched in basic and acidic residues.

Belongs to the CSN7/EIF3M family. CSN7 subfamily. As to quaternary structure, component of the CSN complex, composed of COPS1/GPS1, COPS2, COPS3, COPS4, COPS5, COPS6, COPS7 (COPS7A or COPS7B), COPS8 and COPS9. In the complex, it probably interacts directly with COPS1, COPS2, COPS4, COPS5, COPS6 and COPS8. Interacts with EIF3S6.

The protein localises to the cytoplasm. It localises to the nucleus. Its function is as follows. Component of the COP9 signalosome complex (CSN), a complex involved in various cellular and developmental processes. The CSN complex is an essential regulator of the ubiquitin (Ubl) conjugation pathway by mediating the deneddylation of the cullin subunits of SCF-type E3 ligase complexes, leading to decrease the Ubl ligase activity of SCF-type complexes such as SCF, CSA or DDB2. The complex is also involved in phosphorylation of p53/TP53, JUN, I-kappa-B-alpha/NFKBIA, ITPK1 and IRF8/ICSBP, possibly via its association with CK2 and PKD kinases. CSN-dependent phosphorylation of TP53 and JUN promotes and protects degradation by the Ubl system, respectively. In Bos taurus (Bovine), this protein is COP9 signalosome complex subunit 7b (COPS7B).